The following is a 511-amino-acid chain: ATP synthase subunit alpha, mitochondrial (511 aa).

An ATP-binding site is contributed by 171-178; the sequence is GDRQTGKT.

This sequence belongs to the ATPase alpha/beta chains family. As to quaternary structure, F-type ATPases have 2 components, CF(1) - the catalytic core - and CF(0) - the membrane proton channel. CF(1) has five subunits: alpha(3), beta(3), gamma(1), delta(1), epsilon(1). CF(0) has three main subunits: a, b and c.

It is found in the mitochondrion. The protein localises to the mitochondrion inner membrane. Mitochondrial membrane ATP synthase (F(1)F(0) ATP synthase or Complex V) produces ATP from ADP in the presence of a proton gradient across the membrane which is generated by electron transport complexes of the respiratory chain. F-type ATPases consist of two structural domains, F(1) - containing the extramembraneous catalytic core, and F(0) - containing the membrane proton channel, linked together by a central stalk and a peripheral stalk. During catalysis, ATP synthesis in the catalytic domain of F(1) is coupled via a rotary mechanism of the central stalk subunits to proton translocation. Subunits alpha and beta form the catalytic core in F(1). Rotation of the central stalk against the surrounding alpha(3)beta(3) subunits leads to hydrolysis of ATP in three separate catalytic sites on the beta subunits. Subunit alpha does not bear the catalytic high-affinity ATP-binding sites. The sequence is that of ATP synthase subunit alpha, mitochondrial (ATPA) from Oenothera biennis (German evening primrose).